Consider the following 527-residue polypeptide: ATP-dependent RNA helicase dbp8 (527 aa).

The span at Met-1–Pro-16 shows a compositional bias: basic and acidic residues. Residues Met-1–Val-70 form a disordered region. A Q motif motif is present at residues Ser-86–Arg-114. Positions Ile-117–Pro-296 constitute a Helicase ATP-binding domain. Residue Ser-130–Thr-137 coordinates ATP. A DEAD box motif is present at residues Asp-239 to Asp-242. In terms of domain architecture, Helicase C-terminal spans Thr-324 to Glu-486.

It belongs to the DEAD box helicase family. DDX49/DBP8 subfamily.

It is found in the nucleus. Its subcellular location is the nucleolus. It carries out the reaction ATP + H2O = ADP + phosphate + H(+). Functionally, ATP-binding RNA helicase involved in 40S ribosomal subunit biogenesis and is required for the normal formation of 18S rRNAs through pre-rRNA processing at A0, A1 and A2 sites. Required for vegetative growth. This chain is ATP-dependent RNA helicase dbp8 (dbp8), found in Aspergillus terreus (strain NIH 2624 / FGSC A1156).